Reading from the N-terminus, the 908-residue chain is Protein translocase subunit SecA (908 aa).

Residues Gln87, 105 to 109 (GEGKT), and Asp512 contribute to the ATP site. The disordered stretch occupies residues 866-908 (GSDEDDAIAAHTPMIRDGDKVGRNDPCPCGSGRKYKQCHGKLS). Over residues 879-888 (MIRDGDKVGR) the composition is skewed to basic and acidic residues. Zn(2+) is bound by residues Cys892, Cys894, Cys903, and His904. The span at 898–908 (RKYKQCHGKLS) shows a compositional bias: basic residues.

This sequence belongs to the SecA family. Monomer and homodimer. Part of the essential Sec protein translocation apparatus which comprises SecA, SecYEG and auxiliary proteins SecDF-YajC and YidC. It depends on Zn(2+) as a cofactor.

It is found in the cell inner membrane. The protein localises to the cytoplasm. It carries out the reaction ATP + H2O + cellular proteinSide 1 = ADP + phosphate + cellular proteinSide 2.. Functionally, part of the Sec protein translocase complex. Interacts with the SecYEG preprotein conducting channel. Has a central role in coupling the hydrolysis of ATP to the transfer of proteins into and across the cell membrane, serving both as a receptor for the preprotein-SecB complex and as an ATP-driven molecular motor driving the stepwise translocation of polypeptide chains across the membrane. The protein is Protein translocase subunit SecA of Shewanella oneidensis (strain ATCC 700550 / JCM 31522 / CIP 106686 / LMG 19005 / NCIMB 14063 / MR-1).